Here is a 364-residue protein sequence, read N- to C-terminus: Fructose-bisphosphate aldolase C (364 aa).

Tyrosine 5 is subject to Phosphotyrosine. Serine 36, serine 39, and serine 45 each carry phosphoserine. Residue arginine 56 participates in substrate binding. Lysine 111 carries the post-translational modification N6-acetyllysine. Serine 132 is modified (phosphoserine). Lysine 147 contributes to the substrate binding site. The active-site Proton acceptor is the glutamate 188. Lysine 230 (schiff-base intermediate with dihydroxyacetone-P) is an active-site residue.

It belongs to the class I fructose-bisphosphate aldolase family. As to quaternary structure, homotetramer. Interacts with ATP6V1E1.

The enzyme catalyses beta-D-fructose 1,6-bisphosphate = D-glyceraldehyde 3-phosphate + dihydroxyacetone phosphate. It functions in the pathway carbohydrate degradation; glycolysis; D-glyceraldehyde 3-phosphate and glycerone phosphate from D-glucose: step 4/4. The protein is Fructose-bisphosphate aldolase C (ALDOC) of Macaca fascicularis (Crab-eating macaque).